Reading from the N-terminus, the 504-residue chain is Maturase K (504 aa).

This sequence belongs to the intron maturase 2 family. MatK subfamily.

It localises to the plastid. The protein localises to the chloroplast. Usually encoded in the trnK tRNA gene intron. Probably assists in splicing its own and other chloroplast group II introns. This is Maturase K from Lobularia maritima (Sweet alyssum).